The chain runs to 363 residues: Flagellar P-ring protein (363 aa).

Residues 1 to 20 form the signal peptide; the sequence is MKIKVLLAVALLAMTVPVKA.

The protein belongs to the FlgI family. The basal body constitutes a major portion of the flagellar organelle and consists of four rings (L,P,S, and M) mounted on a central rod.

The protein localises to the periplasm. The protein resides in the bacterial flagellum basal body. Assembles around the rod to form the L-ring and probably protects the motor/basal body from shearing forces during rotation. The chain is Flagellar P-ring protein from Shewanella amazonensis (strain ATCC BAA-1098 / SB2B).